The primary structure comprises 221 residues: Urease accessory protein UreE (221 aa).

The span at 171 to 180 shows a compositional bias: basic and acidic residues; the sequence is HHGHDHDHGH. Residues 171-221 form a disordered region; that stretch reads HHGHDHDHGHSHSHSHSHSHSHSHSHDHDHDHDHEHDVKGHVHGPGCGHKH. Basic residues predominate over residues 181–193; it reads SHSHSHSHSHSHS. A compositionally biased stretch (basic and acidic residues) spans 194–210; sequence HSHDHDHDHDHEHDVKG.

This sequence belongs to the UreE family.

It is found in the cytoplasm. In terms of biological role, involved in urease metallocenter assembly. Binds nickel. Probably functions as a nickel donor during metallocenter assembly. The sequence is that of Urease accessory protein UreE from Cupriavidus pinatubonensis (strain JMP 134 / LMG 1197) (Cupriavidus necator (strain JMP 134)).